A 382-amino-acid chain; its full sequence is S-adenosylmethionine synthase (382 aa).

An ATP-binding site is contributed by His-16. Asp-18 is a Mg(2+) binding site. Glu-44 contributes to the K(+) binding site. Positions 57 and 100 each coordinate L-methionine. The interval 100 to 110 is flexible loop; it reads QSPDIAQGVDN. Residues 165-167, 231-232, Asp-240, 246-247, and Lys-267 each bind ATP; these read DAK, RF, and RK. Asp-240 provides a ligand contact to L-methionine. Lys-271 contributes to the L-methionine binding site.

Belongs to the AdoMet synthase family. As to quaternary structure, homotetramer; dimer of dimers. Requires Mg(2+) as cofactor. K(+) is required as a cofactor.

The protein localises to the cytoplasm. It catalyses the reaction L-methionine + ATP + H2O = S-adenosyl-L-methionine + phosphate + diphosphate. It functions in the pathway amino-acid biosynthesis; S-adenosyl-L-methionine biosynthesis; S-adenosyl-L-methionine from L-methionine: step 1/1. Functionally, catalyzes the formation of S-adenosylmethionine (AdoMet) from methionine and ATP. The overall synthetic reaction is composed of two sequential steps, AdoMet formation and the subsequent tripolyphosphate hydrolysis which occurs prior to release of AdoMet from the enzyme. The polypeptide is S-adenosylmethionine synthase (Legionella pneumophila subsp. pneumophila (strain Philadelphia 1 / ATCC 33152 / DSM 7513)).